Reading from the N-terminus, the 141-residue chain is Large ribosomal subunit protein uL14 (141 aa).

Belongs to the universal ribosomal protein uL14 family. Part of the 50S ribosomal subunit. Forms a cluster with proteins L3 and L24e, part of which may contact the 16S rRNA in 2 intersubunit bridges.

Functionally, binds to 23S rRNA. Forms part of two intersubunit bridges in the 70S ribosome. The sequence is that of Large ribosomal subunit protein uL14 from Pyrococcus horikoshii (strain ATCC 700860 / DSM 12428 / JCM 9974 / NBRC 100139 / OT-3).